Consider the following 135-residue polypeptide: Large ribosomal subunit protein bL12c (135 aa).

It belongs to the bacterial ribosomal protein bL12 family. As to quaternary structure, homodimer. Part of the ribosomal stalk of the 50S ribosomal subunit. Forms a multimeric L10(L12)X complex, where L10 forms an elongated spine to which 2 to 4 L12 dimers bind in a sequential fashion. Binds GTP-bound translation factors.

It localises to the plastid. Its subcellular location is the chloroplast. Its function is as follows. Forms part of the ribosomal stalk which helps the ribosome interact with GTP-bound translation factors. Is thus essential for accurate translation. This chain is Large ribosomal subunit protein bL12c, found in Chara vulgaris (Common stonewort).